The primary structure comprises 548 residues: Cytochrome P450 monooxygenase lcsK (548 aa).

Transmembrane regions (helical) follow at residues 28-48 (HAYPWRYVALLLAGSLSLWAF) and 68-88 (VLLFLYLGGLAGSVLLYRLFF). Residues Asn172, Asn223, Asn242, and Asn404 are each glycosylated (N-linked (GlcNAc...) asparagine). A heme-binding site is contributed by Cys487.

This sequence belongs to the cytochrome P450 family. Requires heme as cofactor.

It is found in the membrane. The protein operates within secondary metabolite biosynthesis. Functionally, cytochrome P450 monooxygenase; part of the gene cluster that mediates the biosynthesis of the lipopeptide antibiotics leucinostatins that show extensive biological activities, including antimalarial, antiviral, antibacterial, antifungal, and antitumor activities, as well as phytotoxic. Leucinostatin A contains nine amino acid residues, including the unusual amino acid 4-methyl-L-proline (MePro), 2-amino-6-hydroxy-4-methyl-8-oxodecanoic acid (AHyMeOA), 3-hydroxyleucine (HyLeu), alpha-aminoisobutyric acid (AIB), beta-Ala, a 4-methylhex-2-enoic acid at the N-terminus as well as a N1,N1-dimethylpropane-1,2-diamine (DPD) at the C-terminus. The biosynthesis of leucinostatins is probably initiated with the assembly of 4-methylhex-2-enoic acid by a reducing PKS. Two reducing polyketide synthases, lcsB and lcsC, have been identified in the cluster and it is not clear which is the one that assembles 4-methylhex-2-enoic acid since both contain KS, AT, DH, cMT, ER, KR and ACP domains. The polyketide residue might be transferred to the NRPS lcsA, mediated by two additional enzymes, the acyl-CoA ligase lcsD and the thioesterase lcsE. The linear polyketide carboxylic acid, which is released from PKS, is converted to a CoA thioester by lcsD, and then lcsE hydrolyzes the thiol bond and shuttles the polyketide intermediate to lcsA. The C domain of the first module catalyzed the condensation of 4-methylhex-2-enoic acid and MePro carried by domain A1, followed by successive condensations of nine amino acids to trigger the elongation of the linear peptide. A5 and A6 domains of lcsA are proposed to incorporate leucine, A2 AHyMeOA, and A3 incorporates HyLeu. A4, A7 and A8 incorporate AIB. The AHyMeOA in leucinostatin A activated by the A2 might be produced by the second PKS (lcsB or lcsC) present within the cluster. The MePro is probably produced via leucine cyclization and may originate from a separate pathway, independent of the cluster. Another nonproteinogenic amino acid, beta-Ala, could be produced by an aspartic acid decarboxylase also localized outside of the cluster. Two candidates are VFPBJ_01400 and VFPBJ_10476. The final peptide scaffold may be released by the NAD(P)H-dependent thioester reductase (TE) at the C-terminal region of lcsA. Transamination of the lcsA product by the transaminase lcsP may produce DPD at the C-terminus. Further hydroxylation steps performed alternatively by the cytochrome P450 monooxygenases lcsI, lcsK and lcsN then yield the non-methylated leucinostatins precursor. It is also possible that leucines can be hydroxylated prior to their incorporation into the peptide. Varying extents of methylation then lead to the formation of leucinostatins A and B. The polypeptide is Cytochrome P450 monooxygenase lcsK (Purpureocillium lilacinum (Paecilomyces lilacinus)).